The chain runs to 226 residues: ATP-dependent dethiobiotin synthetase BioD (226 aa).

12 to 17 (GVGKTV) is a binding site for ATP. A Mg(2+)-binding site is contributed by T16. The active site involves K37. T41 lines the substrate pocket. ATP contacts are provided by residues D49, 108-111 (EGAG), and 169-170 (GS). Mg(2+)-binding residues include D49 and E108.

Belongs to the dethiobiotin synthetase family. Homodimer. Requires Mg(2+) as cofactor.

The protein localises to the cytoplasm. The catalysed reaction is (7R,8S)-7,8-diammoniononanoate + CO2 + ATP = (4R,5S)-dethiobiotin + ADP + phosphate + 3 H(+). It functions in the pathway cofactor biosynthesis; biotin biosynthesis; biotin from 7,8-diaminononanoate: step 1/2. Its function is as follows. Catalyzes a mechanistically unusual reaction, the ATP-dependent insertion of CO2 between the N7 and N8 nitrogen atoms of 7,8-diaminopelargonic acid (DAPA, also called 7,8-diammoniononanoate) to form a ureido ring. The protein is ATP-dependent dethiobiotin synthetase BioD of Mycobacterium marinum (strain ATCC BAA-535 / M).